The primary structure comprises 470 residues: Uronate isomerase (470 aa).

The protein belongs to the metallo-dependent hydrolases superfamily. Uronate isomerase family.

The enzyme catalyses D-glucuronate = D-fructuronate. The catalysed reaction is aldehydo-D-galacturonate = keto-D-tagaturonate. Its pathway is carbohydrate metabolism; pentose and glucuronate interconversion. The polypeptide is Uronate isomerase (Vibrio vulnificus (strain YJ016)).